The following is a 750-amino-acid chain: Methylmalonyl-CoA mutase, mitochondrial (750 aa).

The N-terminal 32 residues, M1 to L32, are a transit peptide targeting the mitochondrion. Q50 is a binding site for malonyl-CoA. K89 is subject to N6-acetyllysine. Residues Y96–M99 and T106–Y110 contribute to the malonyl-CoA site. K212 is subject to N6-acetyllysine. Malonyl-CoA-binding positions include T216–Q218, R228, K255, H265, and R304–S306. K335 is subject to N6-acetyllysine. An N6-succinyllysine modification is found at K343. The residue at position 481 (S481) is a Phosphoserine. Residue K595 is modified to N6-succinyllysine. K602 carries the post-translational modification N6-acetyllysine. Residues R614–K746 enclose the B12-binding domain. Position 627 (H627) interacts with adenosylcob(III)alamin.

This sequence belongs to the methylmalonyl-CoA mutase family. Homodimer. Interacts (the apoenzyme form) with MMAA; the interaction is GTP dependent. It depends on adenosylcob(III)alamin as a cofactor.

It localises to the mitochondrion matrix. It is found in the mitochondrion. Its subcellular location is the cytoplasm. It catalyses the reaction (R)-methylmalonyl-CoA = succinyl-CoA. With respect to regulation, during catalysis, accumulation of oxidized inactive cofactor hydroxocobalamin (OH2Cbl) leads to loss of MMUT activity. Interaction with MMAA decreases the rate of OH2Cbl formation and promotes the replacement of OH2Cbl by the active cofactor adenosylcobalamin (AdoCbl), thereby restoring MMUT activity. Inhibited by itaconyl-CoA, a metabolite that inactivates the coenzyme B12 cofactor. Inhibited at high concentration of substrate. Its function is as follows. Catalyzes the reversible isomerization of methylmalonyl-CoA (MMCoA) (generated from branched-chain amino acid metabolism and degradation of dietary odd chain fatty acids and cholesterol) to succinyl-CoA (3-carboxypropionyl-CoA), a key intermediate of the tricarboxylic acid cycle. This chain is Methylmalonyl-CoA mutase, mitochondrial, found in Homo sapiens (Human).